Here is a 278-residue protein sequence, read N- to C-terminus: Large ribosomal subunit protein uL2 (278 aa).

The tract at residues 223–278 (GVAMNPIDHPHGGGEGRTSGGRHPVTPWGFPTKGKKTRSNKRTDTFIVSSRHNRKK) is disordered.

The protein belongs to the universal ribosomal protein uL2 family. Part of the 50S ribosomal subunit. Forms a bridge to the 30S subunit in the 70S ribosome.

Its function is as follows. One of the primary rRNA binding proteins. Required for association of the 30S and 50S subunits to form the 70S ribosome, for tRNA binding and peptide bond formation. It has been suggested to have peptidyltransferase activity; this is somewhat controversial. Makes several contacts with the 16S rRNA in the 70S ribosome. This Methylobacterium nodulans (strain LMG 21967 / CNCM I-2342 / ORS 2060) protein is Large ribosomal subunit protein uL2.